We begin with the raw amino-acid sequence, 110 residues long: Urease subunit beta (110 aa).

The protein belongs to the urease beta subunit family. Heterotrimer of UreA (gamma), UreB (beta) and UreC (alpha) subunits. Three heterotrimers associate to form the active enzyme.

The protein resides in the cytoplasm. It catalyses the reaction urea + 2 H2O + H(+) = hydrogencarbonate + 2 NH4(+). It functions in the pathway nitrogen metabolism; urea degradation; CO(2) and NH(3) from urea (urease route): step 1/1. In Pseudoalteromonas translucida (strain TAC 125), this protein is Urease subunit beta.